The sequence spans 260 residues: CD40 ligand (260 aa).

Over Met1 to Lys22 the chain is Cytoplasmic. The helical; Signal-anchor for type II membrane protein transmembrane segment at Ile23 to Leu46 threads the bilayer. Residues His47–Leu260 lie on the Extracellular side of the membrane. A THD domain is found at Val121–Leu260. Cys177 and Cys217 are disulfide-bonded. An N-linked (GlcNAc...) asparagine glycan is attached at Asn239.

It belongs to the tumor necrosis factor family. Homotrimer. Interacts with CD28. CD40 ligand, soluble form: Exists as either a monomer or a homotrimer. Forms a ternary complex between CD40 and integrins for CD40-CD40LG signaling. In terms of processing, the soluble form derives from the membrane form by proteolytic processing.

Its subcellular location is the cell membrane. The protein localises to the cell surface. It localises to the secreted. In terms of biological role, cytokine that acts as a ligand to CD40/TNFRSF5. Costimulates T-cell proliferation and cytokine production. Its cross-linking on T-cells generates a costimulatory signal which enhances the production of IL4 and IL10 in conjunction with the TCR/CD3 ligation and CD28 costimulation. Induces the activation of NF-kappa-B. Induces the activation of kinases MAPK8 and PAK2 in T-cells. Mediates B-cell proliferation in the absence of co-stimulus as well as IgE production in the presence of IL4. Involved in immunoglobulin class switching. Its function is as follows. Acts as a ligand for integrins, specifically ITGA5:ITGB1 and ITGAV:ITGB3; both integrins and the CD40 receptor are required for activation of CD40-CD40LG signaling, which have cell-type dependent effects, such as B-cell activation, NF-kappa-B signaling and anti-apoptotic signaling. The chain is CD40 ligand (CD40LG) from Felis catus (Cat).